A 494-amino-acid polypeptide reads, in one-letter code: Splicing regulatory glutamine/lysine-rich protein 1 (494 aa).

Residues 69 to 145 (RTVYVGNLNS…RPLKINHSNN (77 aa)) enclose the RRM domain. Residues Ser-174 and Ser-187 each carry the phosphoserine modification. Residues 176–494 (ISAAIEPESG…ESPCSKADAV (319 aa)) form a disordered region. Basic and acidic residues predominate over residues 183–192 (ESGKSNERKG). Residues 193-262 (GRSRSHTRSK…KSRSRSRSRD (70 aa)) are compositionally biased toward basic residues. Positions 263–340 (KRKDTREKVK…DRSKETDEKR (78 aa)) are enriched in basic and acidic residues. A Phosphothreonine modification is found at Thr-348. Residues 357–373 (RRSRSTSRERRRRRSRS) are compositionally biased toward basic residues. Residues 404-474 (REKERDHISD…SPRTEDEGKV (71 aa)) are compositionally biased toward basic and acidic residues. Positions 476-486 (HNGNCQPNEES) are enriched in polar residues. Residue Lys-490 forms a Glycyl lysine isopeptide (Lys-Gly) (interchain with G-Cter in SUMO2) linkage.

It belongs to the splicing factor SR family. As to quaternary structure, homodimer. Binds SFRS1, SFRS2, SFRS3 and SFRS6. Interacts with the spliceosome. Interacts with SREK1IP1.

The protein localises to the nucleus. Functionally, participates in the regulation of alternative splicing by modulating the activity of other splice facors. Inhibits the splicing activity of SFRS1, SFRS2 and SFRS6. Augments the splicing activity of SFRS3. The polypeptide is Splicing regulatory glutamine/lysine-rich protein 1 (Srek1) (Mus musculus (Mouse)).